We begin with the raw amino-acid sequence, 343 residues long: Dihydroorotate dehydrogenase (quinone) (343 aa).

Residues Ala61 to Lys65 and Thr85 each bind FMN. A substrate-binding site is contributed by Lys65. Asn110–Phe114 is a binding site for substrate. Positions 138 and 171 each coordinate FMN. Substrate is bound at residue Asn171. Ser174 (nucleophile) is an active-site residue. Asn176 lines the substrate pocket. FMN is bound by residues Lys216 and Thr244. A substrate-binding site is contributed by Asn245 to Thr246. FMN is bound by residues Gly267, Gly296, and Tyr317–Ser318.

The protein belongs to the dihydroorotate dehydrogenase family. Type 2 subfamily. As to quaternary structure, monomer. Requires FMN as cofactor.

The protein resides in the cell membrane. It carries out the reaction (S)-dihydroorotate + a quinone = orotate + a quinol. The protein operates within pyrimidine metabolism; UMP biosynthesis via de novo pathway; orotate from (S)-dihydroorotate (quinone route): step 1/1. Its function is as follows. Catalyzes the conversion of dihydroorotate to orotate with quinone as electron acceptor. This Pseudomonas savastanoi pv. phaseolicola (strain 1448A / Race 6) (Pseudomonas syringae pv. phaseolicola (strain 1448A / Race 6)) protein is Dihydroorotate dehydrogenase (quinone).